A 73-amino-acid chain; its full sequence is Serine rich endogenous peptide 14 (73 aa).

The first 31 residues, 1–31 (MAAKTSNLVALLLSLFLLLLSISSQVGLGEA), serve as a signal peptide directing secretion. Residues 44-73 (VSHPSPPPPHRSMAPPIFVPPSTSHKGQGP) form a disordered region. The SCOOP motif signature appears at 59-73 (PIFVPPSTSHKGQGP). Residues 64–73 (PSTSHKGQGP) are compositionally biased toward polar residues. The SxS motif essential for MIK2 binding motif lies at 65–67 (STS).

The protein belongs to the serine rich endogenous peptide (SCOOP) phytocytokine family. As to quaternary structure, interacts with MIK2 (via extracellular leucine-rich repeat domain); this interaction triggers the formation of complex between MIK2 and the BAK1/SERK3 and SERK4 coreceptors, and subsequent BAK1 activation by phosphorylation. Mostly expressed in seedlings shoots and leaves, and, to a lower extent, in roots, stems, siliques, seeds and flowers.

It localises to the cell membrane. Its subcellular location is the secreted. The protein localises to the extracellular space. It is found in the apoplast. In terms of biological role, brassicaceae-specific phytocytokine (plant endogenous peptide released into the apoplast) perceived by MIK2 in a BAK1/SERK3 and SERK4 coreceptors-dependent manner, that modulates various physiological and antimicrobial processes including growth prevention and reactive oxygen species (ROS) response regulation. Inhibits root growth and regulates root meristems. Prevents general growth and development. Exhibits antibacterial effects against Pseudomonas syringae pv. tomato DC3000, Ralstonia solanacearum, Bacillus subtilis and Agrobacterium tumefaciens, thus being an antimicrobial peptide (AMP). This is Serine rich endogenous peptide 14 from Arabidopsis thaliana (Mouse-ear cress).